Here is a 30-residue protein sequence, read N- to C-terminus: GLAGAISSALDKLKQSQLIKNYAKKLGYPR.

Expressed by the skin dorsal glands.

The protein localises to the secreted. This is Uperin-6.1 from Uperoleia inundata (Floodplain toadlet).